The following is a 134-amino-acid chain: Putative toxin MJ0605 (134 aa).

Belongs to the UPF0332 family.

Putative toxin component of a putative type VII toxin-antitoxin (TA) system. Its cognate antitoxin might be MJ0604. The chain is Putative toxin MJ0605 from Methanocaldococcus jannaschii (strain ATCC 43067 / DSM 2661 / JAL-1 / JCM 10045 / NBRC 100440) (Methanococcus jannaschii).